The primary structure comprises 1027 residues: MDFSIVKTQILNNRRTFRTPFKVSSMCFSSQNDLIALGSKTGEILLKRTSWKMIWKTNINMIQAVGTECKLDSSVSALHFSPDGRFLAAATSKGIIHLLDVETGKVRFSVKAASEKIAKLHWNCVREKPFISNLGEFTTRIKNVEAIEGAIELAETTPNISQEEIAFVYQRLDEDGSSFKHEDAHKESLERTLISTETFRESLQNTILLATDDMDSKIIVLVAGVFPYMEIDISDTLLQYNQSLLMLYDMHYSSAFGGVSFLATTYGPFLDCKQNELKPPGAEPKKDGQGCHTLLFNVKLNINSSLWDTALRYIRLLFGFNLYSISLETTKRNWEEQIDNLHSLFDTKTKAVKIGNVLLEMLLSGSTDAAGEAFLERGLGTDGLDKIELFATKHMPEVCRIARGQLSTSARNLCFQRCEFSTSLSRYAKFIQLKDDDSFLYDEDPPAYLSESNIWLNTLEEKINILDMKTRHLGIQCLTMMQELGHLVKWISMTKPFAKTMKVNALMKIKRMNIAKILLYIVRNFIPDPEAVKDIENRLFNLKELVSKQKKKDLEDKFDEVEYLYRLERIAEVERKKLIETFHEKFRFADLDDDDLTPLLFQELDHPIDIFTDSMMEQNDSSPFLEEDEGEPEQEEQKPDEEPEPEGEPQPACDLDRVGSFFEKELSQKALEVLPKCDETFDCVLNERGSRMNSIEIQKMGILRVLEDLAATLSSPQKIHCDKAGNQKKLEVSFIYEITSTPTHQGYQDAKISSVTPSYYKRHPFNQLSGMGRSIQVSVLQKNEFSSIVIVPTSDVLPEDENEVNDHVEKLKRCYEFEKIDVTVDKSSAENRPPGETDAMEVDSNELRIDVDLGPVVPEYDTLIELSQVHPLHHGELVLLGKFTSAQEGTGVMSQMMRSISSYPHEIPEDKDVFAKNSSEDGSSEIPIETLIIHPTIQLAAYLHDDGSKITIGDMKPEVPPIADYEEKTVRKTFRDYQRRRERYREDMGVMNMNDVQYDVLVQEAMDSGRDLTDNGESDEDEEDDDI.

WD repeat units lie at residues 18-65 and 70-109; these read RTPF…IQAV and KLDS…VRFS. Disordered stretches follow at residues 619-655 and 1005-1027; these read NDSS…ACDL and AMDS…DDDI. Composition is skewed to acidic residues over residues 625 to 647 and 1014 to 1027; these read LEED…EPEG and DNGE…DDDI.

It belongs to the APC4 family. The APC/C is probably composed of at least 12 subunits: apc-2, apc-10, apc-11, cdc-26, emb-1, emb-27, emb-30, mat-1, mat-2, mat-3, such-1 and gfi-3.

Its pathway is protein modification; protein ubiquitination. Functionally, probable component of the anaphase promoting complex/cyclosome (APC/C), a cell cycle-regulated E3 ubiquitin ligase that controls progression through mitosis and the G1 phase of the cell cycle. The APC/C complex acts by mediating ubiquitination and subsequent degradation of target proteins. Developmental role in early embryogenesis and the metaphase to anaphase transition in oocyte and spermatocyte meiosis and mitosis in somatic and germ cells. Required for embryonic anterior-posterior axis formation. Negatively regulates ify-1 protein levels during meiosis I. Plays a role in regulating the abundance of glr-1 receptors in postmitotic neurons, which may in turn control animal locomotion. Involved in regulating GABA neurotransmitter release at neuromuscular junctions in GABA motor neurons. The chain is Abnormal embryogenesis protein 30 from Caenorhabditis elegans.